A 99-amino-acid polypeptide reads, in one-letter code: NADH-quinone oxidoreductase subunit K (99 aa).

Transmembrane regions (helical) follow at residues 3–23 (PANYLYLSALLFTIGASGVLL), 28–48 (IVMFMCVELMLNAVNLAFVTF), and 59–79 (MIAFFTMVVAACEVVVGLAII).

It belongs to the complex I subunit 4L family. In terms of assembly, NDH-1 is composed of 14 different subunits. Subunits NuoA, H, J, K, L, M, N constitute the membrane sector of the complex.

The protein localises to the cell membrane. It catalyses the reaction a quinone + NADH + 5 H(+)(in) = a quinol + NAD(+) + 4 H(+)(out). Functionally, NDH-1 shuttles electrons from NADH, via FMN and iron-sulfur (Fe-S) centers, to quinones in the respiratory chain. The immediate electron acceptor for the enzyme in this species is believed to be a menaquinone. Couples the redox reaction to proton translocation (for every two electrons transferred, four hydrogen ions are translocated across the cytoplasmic membrane), and thus conserves the redox energy in a proton gradient. This chain is NADH-quinone oxidoreductase subunit K, found in Mycobacterium marinum (strain ATCC BAA-535 / M).